A 443-amino-acid chain; its full sequence is Exodeoxyribonuclease 7 large subunit (443 aa).

Belongs to the XseA family. Heterooligomer composed of large and small subunits.

The protein resides in the cytoplasm. The catalysed reaction is Exonucleolytic cleavage in either 5'- to 3'- or 3'- to 5'-direction to yield nucleoside 5'-phosphates.. Functionally, bidirectionally degrades single-stranded DNA into large acid-insoluble oligonucleotides, which are then degraded further into small acid-soluble oligonucleotides. This Stenotrophomonas maltophilia (strain R551-3) protein is Exodeoxyribonuclease 7 large subunit.